The sequence spans 102 residues: Putative pterin-4-alpha-carbinolamine dehydratase (102 aa).

It belongs to the pterin-4-alpha-carbinolamine dehydratase family.

The catalysed reaction is (4aS,6R)-4a-hydroxy-L-erythro-5,6,7,8-tetrahydrobiopterin = (6R)-L-erythro-6,7-dihydrobiopterin + H2O. In Burkholderia cenocepacia (strain ATCC BAA-245 / DSM 16553 / LMG 16656 / NCTC 13227 / J2315 / CF5610) (Burkholderia cepacia (strain J2315)), this protein is Putative pterin-4-alpha-carbinolamine dehydratase.